The primary structure comprises 67 residues: Phycobilisome 7.8 kDa linker polypeptide, allophycocyanin-associated, core (67 aa).

One can recognise a CpcD-like domain in the interval 1 to 56; it reads MRMFRITACVPSQTRIRTQRELQNTYFTKLVPYDNWFREQQRIMKMGGKIVKVELA.

This sequence belongs to the phycobilisome linker protein family.

It localises to the cellular thylakoid membrane. Its function is as follows. Rod linker protein, associated with allophycocyanin. Linker polypeptides determine the state of aggregation and the location of the disk-shaped phycobiliprotein units within the phycobilisome and modulate their spectroscopic properties in order to mediate a directed and optimal energy transfer. This Synechocystis sp. (strain PCC 6714) (Aphanocapsa sp. (strain PCC 6714)) protein is Phycobilisome 7.8 kDa linker polypeptide, allophycocyanin-associated, core (apcC).